The primary structure comprises 263 residues: Aminoglycoside 3'-phosphotransferase (263 aa).

D183 (proton acceptor) is an active-site residue.

This sequence belongs to the aminoglycoside phosphotransferase family.

The enzyme catalyses kanamycin A + ATP = kanamycin 3'-phosphate + ADP + H(+). Its function is as follows. Resistance to kanamycin and structurally-related aminoglycosides, including amikacin. The protein is Aminoglycoside 3'-phosphotransferase (rph) of Streptomyces ribosidificus.